The sequence spans 254 residues: 3-deoxy-manno-octulosonate cytidylyltransferase (254 aa).

Belongs to the KdsB family.

It is found in the cytoplasm. The enzyme catalyses 3-deoxy-alpha-D-manno-oct-2-ulosonate + CTP = CMP-3-deoxy-beta-D-manno-octulosonate + diphosphate. It functions in the pathway nucleotide-sugar biosynthesis; CMP-3-deoxy-D-manno-octulosonate biosynthesis; CMP-3-deoxy-D-manno-octulosonate from 3-deoxy-D-manno-octulosonate and CTP: step 1/1. Its pathway is bacterial outer membrane biogenesis; lipopolysaccharide biosynthesis. In terms of biological role, activates KDO (a required 8-carbon sugar) for incorporation into bacterial lipopolysaccharide in Gram-negative bacteria. This chain is 3-deoxy-manno-octulosonate cytidylyltransferase, found in Chlamydia trachomatis serovar L2 (strain ATCC VR-902B / DSM 19102 / 434/Bu).